The chain runs to 410 residues: MRCAPTAGAALMLCAATAGLLSAQGRPEPPETPRFASWDEVNVLAHGLLQLGHGLREHVERTRGQLGELERRLGACGAACKDPEGSAAPPRAQANLVNPGGGDASPETLRSLKTQLEAQNSRIQQLFQKVAQQQRHLEKQQLRIQNLQSQMDHLAPRHLGHEMAKPARRKRLPKMAQLAGPAHNISRLHRLPRDCQELFEEGERESGLFQIQPQGSPPFLVNCKMTSDGGWTVIQRRQDGSVDFNQPWEAYKDGFGDPQGEFWLGLEKVHHILGDRGSRLAVQLQDWEGNAESLQFPIHLGGEDTAYSLQLTPPVASKLGATTFSPSGLSLPFSTWDQDHDLRGDKNCARSLSGGWWFGTCSHSNLNGQYFHSIPRQRQQRKKGIFWKTWRGRYYPLQATTILVQPTAAS.

The first 23 residues, 1–23, serve as a signal peptide directing secretion; sequence MRCAPTAGAALMLCAATAGLLSA. A disordered region spans residues 81–106; sequence KDPEGSAAPPRAQANLVNPGGGDASP. Positions 107-155 form a coiled coil; it reads ETLRSLKTQLEAQNSRIQQLFQKVAQQQRHLEKQQLRIQNLQSQMDHLA. Residue asparagine 184 is glycosylated (N-linked (GlcNAc...) asparagine). One can recognise a Fibrinogen C-terminal domain in the interval 186–408; sequence SRLHRLPRDC…ATTILVQPTA (223 aa). Intrachain disulfides connect cysteine 195–cysteine 223 and cysteine 348–cysteine 361.

Homooligomer; disulfide-linked via Cys residues in the N-terminal part of the protein. The homooligomer undergoes proteolytic processing to release the ANGPTL4 C-terminal chain, which circulates as a monomer. The homooligomer unprocessed form is able to interact with the extracellular matrix. N-glycosylated. Post-translationally, forms disulfide-linked dimers and tetramers. In terms of processing, cleaved into a smaller N-terminal chain and a larger chain that contains the fibrinogen C-terminal domain; both cleaved and uncleaved forms are detected in the extracellular space. The cleaved form is not present within the cell.

It localises to the secreted. Its subcellular location is the extracellular space. The protein localises to the extracellular matrix. Its function is as follows. Mediates inactivation of the lipoprotein lipase LPL, and thereby plays a role in the regulation of triglyceride clearance from the blood serum and in lipid metabolism. May also play a role in regulating glucose homeostasis and insulin sensitivity. Inhibits proliferation, migration, and tubule formation of endothelial cells and reduces vascular leakage. Upon heterologous expression, inhibits the adhesion of endothelial cell to the extracellular matrix (ECM), and inhibits the reorganization of the actin cytoskeleton, formation of actin stress fibers and focal adhesions in endothelial cells that have adhered to ANGPTL4-containing ECM (in vitro). Depending on context, may modulate tumor-related angiogenesis. Mediates inactivation of the lipoprotein lipase LPL, and thereby plays an important role in the regulation of triglyceride clearance from the blood serum and in lipid metabolism. Has higher activity in LPL inactivation than the uncleaved protein. This chain is Angiopoietin-related protein 4 (ANGPTL4), found in Bos taurus (Bovine).